We begin with the raw amino-acid sequence, 151 residues long: Ubiquitin-conjugating enzyme E2 N (151 aa).

In terms of domain architecture, UBC core spans serine 3 to valine 149. Cysteine 87 acts as the Glycyl thioester intermediate in catalysis.

The protein belongs to the ubiquitin-conjugating enzyme family.

It carries out the reaction S-ubiquitinyl-[E1 ubiquitin-activating enzyme]-L-cysteine + [E2 ubiquitin-conjugating enzyme]-L-cysteine = [E1 ubiquitin-activating enzyme]-L-cysteine + S-ubiquitinyl-[E2 ubiquitin-conjugating enzyme]-L-cysteine.. Its pathway is protein modification; protein ubiquitination. Functionally, catalyzes the covalent attachment of ubiquitin to other proteins. The sequence is that of Ubiquitin-conjugating enzyme E2 N (ben) from Drosophila melanogaster (Fruit fly).